The sequence spans 743 residues: Keratin, type I cytoskeletal 9 (743 aa).

Residues 1-16 are compositionally biased toward low complexity; that stretch reads MSCRQSSSSFWSSSSS. Positions 1–46 are disordered; sequence MSCRQSSSSFWSSSSSCGGGGGRGGSGGSMRSSFSRSSRAGGGGGG. Positions 1–130 are head; that stretch reads MSCRQSSSSF…GGEGGILNTN (130 aa). Residues serine 14 and serine 16 each carry the phosphoserine modification. A compositionally biased stretch (gly residues) spans 17–28; the sequence is CGGGGGRGGSGG. Residues 29–39 show a composition bias toward low complexity; it reads SMRSSFSRSSR. A phosphoserine mark is found at serine 55 and serine 155. Residues 131-166 are coil 1A; that stretch reads EKIVMQNLNSRLASYMEKVLELEESNTAMEKQIQDW. The region spanning 131–443 is the IF rod domain; it reads EKIVMQNLNS…ELLEGGQQDF (313 aa). The segment at 167 to 185 is linker 1; that stretch reads YSKRGPKVFQKDNTHYYDT. The segment at 186-277 is coil 1B; it reads IEDLKDRIVD…KNHKEEMSQL (92 aa). A linker 12 region spans residues 278 to 300; the sequence is TGQNDGDVNVEINVAPSTDLTRV. Residues 301-439 form a coil 2 region; it reads LNDMREEYEQ…ETYRELLEGG (139 aa). Disordered stretches follow at residues 440 to 468 and 501 to 743; these read QQDF…GSYG and GGSG…KMRY. The tail stretch occupies residues 440-709; sequence QQDFESSGAG…GGGSGSGGGS (270 aa). Gly residues-rich tracts occupy residues 449–468 and 501–717; these read GQIG…GSYG and GGSG…GGGN.

Belongs to the intermediate filament family. In terms of assembly, heterotetramer of two type I and two type II keratins. In terms of tissue distribution, expressed in footpad epidermis and testis (at protein level).

Functionally, may serve an important special function either in the mature palmar and plantar skin tissue or in the morphogenetic program of the formation of these tissues. Plays a role in keratin filament assembly. Plays an essential role in the correct development of sperm. This Mus musculus (Mouse) protein is Keratin, type I cytoskeletal 9.